Here is a 554-residue protein sequence, read N- to C-terminus: Phenylalanine--tRNA ligase beta subunit (554 aa).

The B5 domain maps to 276–351 (LSLKSRMISV…INYGYEKFEG (76 aa)). Mg(2+)-binding residues include Asp-329, Asp-335, Glu-338, and Glu-339.

Belongs to the phenylalanyl-tRNA synthetase beta subunit family. Type 2 subfamily. Tetramer of two alpha and two beta subunits. The cofactor is Mg(2+).

The protein resides in the cytoplasm. The catalysed reaction is tRNA(Phe) + L-phenylalanine + ATP = L-phenylalanyl-tRNA(Phe) + AMP + diphosphate + H(+). This Methanococcus maripaludis (strain C5 / ATCC BAA-1333) protein is Phenylalanine--tRNA ligase beta subunit.